Reading from the N-terminus, the 66-residue chain is Large ribosomal subunit protein bL35 (66 aa).

Over residues 1 to 16 (MPKQKTHRASAKRFKR) the composition is skewed to basic residues. Positions 1 to 21 (MPKQKTHRASAKRFKRTGSGG) are disordered.

This sequence belongs to the bacterial ribosomal protein bL35 family.

In Streptococcus agalactiae serotype Ia (strain ATCC 27591 / A909 / CDC SS700), this protein is Large ribosomal subunit protein bL35.